A 181-amino-acid chain; its full sequence is Anthrone oxygenase encC (181 aa).

The next 4 helical transmembrane spans lie at 1–21, 65–81, 88–108, and 153–173; these read MASV…WLSG, QIAA…AWCA, LLYG…LLFM, and FLAG…LFAA.

The protein belongs to the anthrone oxygenase family. In terms of tissue distribution, endocrocin is specifically produced in conidia.

The protein resides in the membrane. Functionally, anthrone oxygenase; part of the gene cluster that mediates the biosynthesis of endocrocin, a simple anthraquinone interesting for many biotechnological applications. The pathway begins with the synthesis of atrochrysone thioester by the polyketide synthase (PKS) encA. The atrochrysone carboxyl ACP thioesterase encB then breaks the thioester bond and releases the atrochrysone carboxylic acid from encA. The atrochrysone carboxylic acid is then converted to endocrocin anthrone which is further oxidized into endocrocin by the anthrone oxygenase encC. The exact function of encD has not been identified yet, but it negatively regulates endocrocin production, likely through the modification of endocrocin itself. The sequence is that of Anthrone oxygenase encC from Aspergillus fumigatus (strain ATCC MYA-4609 / CBS 101355 / FGSC A1100 / Af293) (Neosartorya fumigata).